A 976-amino-acid chain; its full sequence is Chloride channel protein 1 (976 aa).

The Cytoplasmic segment spans residues 1–118 (MQPSQSLRRG…VVRRKLGEDW (118 aa)). The disordered stretch occupies residues 71 to 92 (DKEQDTGMSKKMGSSESMDSKD). Low complexity predominate over residues 77-87 (GMSKKMGSSES). Residues 119-150 (IFLVLLGLLMALVSWSMDYVSAKSLQAYKWSY) form a helical membrane-spanning segment. Residues 151–158 (YQMQPNLP) are Extracellular-facing. Residues 159 to 179 (LQYLVWVTFPLTLILFSAVFC) traverse the membrane as a helical segment. Topologically, residues 180–183 (HLIS) are cytoplasmic. The note=Loop between two helices intramembrane region spans 184 to 189 (PQAVGS). The Selectivity filter part_1 signature appears at 188 to 192 (GSGIP). S189 contributes to the chloride binding site. An intramembrane region (helical) is located at residues 190 to 195 (GIPEMK). At 196-208 (TILRGVILKEYLT) the chain is on the cytoplasmic side. The helical intramembrane region spans 209–224 (LKAFVAKVVALTAGLG). An intramembrane region (note=Loop between two helices) is located at residues 225–230 (SGIPVG). The short motif at 230-234 (GKEGP) is the Selectivity filter part_2 element. An intramembrane region (helical) is located at residues 231–246 (KEGPFVHIASICAAVL). Residues 247-268 (SKFMSMFCGVYEQPYYYTDMLT) are Cytoplasmic-facing. 2 intramembrane regions (helical) span residues 269–280 (VGCAVGVGCCFG) and 281–290 (TPLGGVLFSI). Residues 291 to 301 (EVTSTYFAVRN) are Cytoplasmic-facing. Residues 302–321 (YWRGFFAATFSAFVFRVLAV) form a helical membrane-spanning segment. Residues 322–347 (WNKDAVTITALFRTNFRMDFPFDLQE) are Extracellular-facing. Residues 348-376 (LPAFAIIGICCGFLGAVFVYLHRQVMLGV) form a helical membrane-spanning segment. Residues 377–390 (RKHKALSQFLAKHR) are Cytoplasmic-facing. Residues 391 to 408 (LLYPGIVTFIIASFTFPP) traverse the membrane as a helical segment. Residues 409–414 (GIGQFM) are Extracellular-facing. The segment at residues 415-418 (AGEL) is an intramembrane region (note=Loop between two helices). The helical intramembrane region spans 419-426 (MPREAIST). Residues 427 to 457 (LFDNNTWVKHVGDPESLGRSAVWIHPRVNVI) lie on the Extracellular side of the membrane. Positions 458-475 (IIIFLFFIMKFWMSIVAT) form an intramembrane region, helical. Positions 476-482 (TMPIPCG) form an intramembrane region, note=Loop between two helices. A Selectivity filter part_3 motif is present at residues 482 to 486 (GGFMP). The segment at residues 483–498 (GFMPVFVLGAAFGRLV) is an intramembrane region (helical). F484 is a chloride binding site. Residues 499–521 (GEIMAMLFPDGILFDDIIYKILP) are Extracellular-facing. Residues 522-538 (GGYAVIGAAALTGAVSH) constitute an intramembrane region (helical). The note=Loop between two helices intramembrane region spans 539-540 (TV). The helical intramembrane region spans 541-554 (STAVICFELTGQIA). Residues 555-557 (HIL) lie on the Extracellular side of the membrane. Residues 558 to 571 (PMMVAVILANMVAQ) constitute an intramembrane region (helical). The segment at residues 572-575 (SLQP) is an intramembrane region (note=Loop between two helices). An intramembrane region (helical) is located at residues 576 to 578 (SLY). Y578 provides a ligand contact to chloride. Residues 579–976 (DSIIQVKKLP…DEEDEDELIL (398 aa)) lie on the Cytoplasmic side of the membrane. One can recognise a CBS 1 domain in the interval 609 to 668 (MVRDVKFVSATCTYGELRTLLQTTTVKTLPLVDSKDSMILLGSVERSELQSLLQRHLGPE). The tract at residues 707-759 (DEDEDEDLSGKPELPPLPPPHPLPSAPLSSEESNGPLPSHKQQPEAPEPADQR) is disordered. Positions 719-731 (ELPPLPPPHPLPS) are enriched in pro residues. Residues 816–871 (IDQSPFQLVEQTSLHKTHTLFSLLGLHLAYVTSMGKLRGVLALEELQKAIEGHTKS) form the CBS 2 domain. The disordered stretch occupies residues 872 to 976 (GVQLRPPLAS…DEEDEDELIL (105 aa)). S881 carries the phosphoserine modification. Pro residues predominate over residues 914-925 (SPEPPAPSPSPA). 2 stretches are compositionally biased toward acidic residues: residues 938-955 (ELEE…EELA) and 967-976 (DEEDEDELIL).

It belongs to the chloride channel (TC 2.A.49) family. ClC-1/CLCN1 subfamily. Homodimer.

Its subcellular location is the cell membrane. It localises to the sarcolemma. The protein localises to the T-tubule. The catalysed reaction is chloride(in) = chloride(out). The enzyme catalyses thiocyanate(in) = thiocyanate(out). It carries out the reaction bromide(in) = bromide(out). It catalyses the reaction nitrate(in) = nitrate(out). The catalysed reaction is iodide(out) = iodide(in). With respect to regulation, modulated by membrane voltage with depolarization favouring channel opening and hyperpolarization favouring channel closure. Inhibited by acidic pH and ATP binding due to a shift of voltage dependence of common gating to more positive voltages. Inhibited by 9-anthracene-carboxylic. Voltage-gated chloride channel involved in skeletal muscle excitability. Generates most of the plasma membrane chloride conductance in skeletal muscle fibers, stabilizes the resting membrane potential and contributes to the repolarization phase during action potential firing. Forms a homodimeric channel where each subunit has its own ion conduction pathway. Conducts double-barreled currents controlled by two types of gates, two fast glutamate gates that control each subunit independently and a slow common gate that opens and shuts off both subunits simultaneously. Has a significant open probability at muscle resting potential and is further activated upon membrane depolarization. Permeable to small monovalent anions with ion selectivity for chloride &gt; thiocyanate &gt; bromide &gt; nitrate &gt; iodide. The sequence is that of Chloride channel protein 1 (CLCN1) from Canis lupus familiaris (Dog).